A 264-amino-acid chain; its full sequence is Tryptophan synthase alpha chain (264 aa).

Catalysis depends on proton acceptor residues E49 and D60.

It belongs to the TrpA family. As to quaternary structure, tetramer of two alpha and two beta chains.

The enzyme catalyses (1S,2R)-1-C-(indol-3-yl)glycerol 3-phosphate + L-serine = D-glyceraldehyde 3-phosphate + L-tryptophan + H2O. It functions in the pathway amino-acid biosynthesis; L-tryptophan biosynthesis; L-tryptophan from chorismate: step 5/5. In terms of biological role, the alpha subunit is responsible for the aldol cleavage of indoleglycerol phosphate to indole and glyceraldehyde 3-phosphate. In Picosynechococcus sp. (strain ATCC 27264 / PCC 7002 / PR-6) (Agmenellum quadruplicatum), this protein is Tryptophan synthase alpha chain.